Reading from the N-terminus, the 423-residue chain is Tegument protein UL43 (423 aa).

Over residues 1–12 (MEKTPAETTAVS) the composition is skewed to polar residues. The disordered stretch occupies residues 1 to 46 (MEKTPAETTAVSAGNVPRDSIPCITNVSADTRGRTRPSRPATVPQR).

The protein belongs to the herpesviridae US22 family.

The protein localises to the virion tegument. This Homo sapiens (Human) protein is Tegument protein UL43 (UL43).